A 142-amino-acid polypeptide reads, in one-letter code: Large ribosomal subunit protein uL13 (142 aa).

The protein belongs to the universal ribosomal protein uL13 family. Part of the 50S ribosomal subunit.

Functionally, this protein is one of the early assembly proteins of the 50S ribosomal subunit, although it is not seen to bind rRNA by itself. It is important during the early stages of 50S assembly. This chain is Large ribosomal subunit protein uL13, found in Pseudoalteromonas atlantica (strain T6c / ATCC BAA-1087).